Here is a 393-residue protein sequence, read N- to C-terminus: Messenger RNA-binding inhibitor of apoptosis 1 (393 aa).

Residues 12–76 (ELYIPQKMKA…EKILRDVWRK (65 aa)) form a KH 1-like region. Positions 79 to 157 (VQIMIREAAL…MMIECLTEHF (79 aa)) are KH 2-like. The KH 3-like stretch occupies residues 259 to 322 (EKIKQWIPTT…NKEQCQEARN (64 aa)). Residues 328 to 393 (MQSHQDKPAS…LTPRKLSPSD (66 aa)) form a disordered region. A compositionally biased stretch (low complexity) spans 345-359 (STPGSPFTSDSSSTT).

In terms of assembly, may interact with wago-4. As to expression, expressed throughout the germline and in oocytes (at protein level).

The protein resides in the cytoplasm. It localises to the perinuclear region. In terms of biological role, RNA-binding protein which binds to its own mRNA and target mRNAs to negatively regulate gene expression to modulate apoptosis and differentiation in the germline. Negatively regulates the expression of the argonaute protein wago-4, and may thus play a role in RNA-mediated gene silencing (RNAi) in the germline. This Caenorhabditis elegans protein is Messenger RNA-binding inhibitor of apoptosis 1.